We begin with the raw amino-acid sequence, 106 residues long: Glycine/glutamate-rich protein sgp1 (106 aa).

Residues 1–20 form the signal peptide; that stretch reads MKYSLIFILTLACLIASSLA. The segment at 20 to 66 is disordered; the sequence is ARPEGEEKPADDAAGDKKEEGAEGDKTAAGGDEGFTGGDGKNAGGAG. Residues 22-45 are compositionally biased toward basic and acidic residues; that stretch reads PEGEEKPADDAAGDKKEEGAEGDK. Residues 50 to 66 are compositionally biased toward gly residues; the sequence is GDEGFTGGDGKNAGGAG.

It localises to the secreted. The protein is Glycine/glutamate-rich protein sgp1 (sgp1) of Glossina morsitans morsitans (Savannah tsetse fly).